The chain runs to 303 residues: Dihydroorotate dehydrogenase B (NAD(+)), catalytic subunit (303 aa).

FMN-binding positions include serine 23 and 47–48 (KS). Substrate is bound by residues lysine 47, 71–75 (NAMGL), and asparagine 125. Asparagine 125 serves as a coordination point for FMN. Cysteine 128 (nucleophile) is an active-site residue. Residues lysine 163 and isoleucine 189 each contribute to the FMN site. Position 190 to 191 (190 to 191 (NT)) interacts with substrate. FMN-binding positions include glycine 215, 241-242 (GG), and 263-264 (GT).

Belongs to the dihydroorotate dehydrogenase family. Type 1 subfamily. In terms of assembly, heterotetramer of 2 PyrK and 2 PyrD type B subunits. FMN is required as a cofactor.

The protein localises to the cytoplasm. The enzyme catalyses (S)-dihydroorotate + NAD(+) = orotate + NADH + H(+). It participates in pyrimidine metabolism; UMP biosynthesis via de novo pathway; orotate from (S)-dihydroorotate (NAD(+) route): step 1/1. In terms of biological role, catalyzes the conversion of dihydroorotate to orotate with NAD(+) as electron acceptor. This chain is Dihydroorotate dehydrogenase B (NAD(+)), catalytic subunit (pyrD), found in Pyrococcus horikoshii (strain ATCC 700860 / DSM 12428 / JCM 9974 / NBRC 100139 / OT-3).